Consider the following 202-residue polypeptide: FMN-dependent NADH:quinone oxidoreductase (202 aa).

FMN-binding positions include S9, S15–S17, M95–F98, and T139–G142.

It belongs to the azoreductase type 1 family. Homodimer. Requires FMN as cofactor.

The enzyme catalyses 2 a quinone + NADH + H(+) = 2 a 1,4-benzosemiquinone + NAD(+). It catalyses the reaction N,N-dimethyl-1,4-phenylenediamine + anthranilate + 2 NAD(+) = 2-(4-dimethylaminophenyl)diazenylbenzoate + 2 NADH + 2 H(+). Quinone reductase that provides resistance to thiol-specific stress caused by electrophilic quinones. Its function is as follows. Also exhibits azoreductase activity. Catalyzes the reductive cleavage of the azo bond in aromatic azo compounds to the corresponding amines. The sequence is that of FMN-dependent NADH:quinone oxidoreductase from Pseudomonas savastanoi pv. phaseolicola (strain 1448A / Race 6) (Pseudomonas syringae pv. phaseolicola (strain 1448A / Race 6)).